The chain runs to 447 residues: Crotonyl-CoA reductase (447 aa).

The protein belongs to the zinc-containing alcohol dehydrogenase family. Crotonyl-CoA carboxylase/reductase subfamily. In terms of assembly, homodimer.

The enzyme catalyses butanoyl-CoA + NADP(+) = (2E)-butenoyl-CoA + NADPH + H(+). With respect to regulation, inhibited by divalent cations (30-100%), beta-chloromercuribenzoate (85%), iodoacetamide (40%) and N-ethylmaleamide (80%). The presence of CoA thioesters containing 12-20 carbon atoms results in inhibition of enzyme activity. The greatest degree of inhibition is observed in the presence of palmitoyl-CoA and myristoyl-CoA. The branched-chain fatty acids, isopalmitoyl-CoA and isomyristoyl-CoA are less effective inhibitors of the crotonyl-CoA reductase. Concentrations of NADPH above 200 uM lead to inhibition of enzyme activity. In terms of biological role, may play a role in supplying butyryl-CoA for straight-chain fatty acid biosynthesis. Catalyzes the conversion of crotonyl-CoA to butyryl-CoA. It shows a high substrate specificity for crotonyl-CoA, a short-chain-length (C4), but no measurable activity is observed with shorter (C3) or longer-chain-length enoyl-CoA thioesters. In Streptomyces collinus, this protein is Crotonyl-CoA reductase (ccr).